A 215-amino-acid chain; its full sequence is Probable phosphoglycerate mutase GpmB (215 aa).

Residues 8-15, 21-22, Arg-58, 82-85, 104-105, and 151-152 each bind substrate; these read RHGETQWN, QG, ELDM, RR, and GM. His-9 (tele-phosphohistidine intermediate) is an active-site residue. Catalysis depends on Glu-82, which acts as the Proton donor/acceptor.

This sequence belongs to the phosphoglycerate mutase family. GpmB subfamily.

It carries out the reaction (2R)-2-phosphoglycerate = (2R)-3-phosphoglycerate. It functions in the pathway carbohydrate degradation; glycolysis; pyruvate from D-glyceraldehyde 3-phosphate: step 3/5. The chain is Probable phosphoglycerate mutase GpmB from Cronobacter sakazakii (strain ATCC BAA-894) (Enterobacter sakazakii).